A 113-amino-acid chain; its full sequence is Protein ZEO1 (113 aa).

Polar residues predominate over residues 1 to 16; it reads MSEIQNKAETAAQDVQ. The tract at residues 1–96 is disordered; sequence MSEIQNKAET…AVSEKKETKK (96 aa). Ser-2 is subject to N-acetylserine. Ser-2 carries the phosphoserine modification. The stretch at 2 to 97 forms a coiled coil; sequence SEIQNKAETA…VSEKKETKKE (96 aa). The span at 17-37 shows a compositional bias: basic and acidic residues; that stretch reads QKLEETKESLQNKGQEVKEQA. Glycyl lysine isopeptide (Lys-Gly) (interchain with G-Cter in ubiquitin) cross-links involve residues Lys-18 and Lys-23. Residue Ser-25 is modified to Phosphoserine. Glycyl lysine isopeptide (Lys-Gly) (interchain with G-Cter in ubiquitin) cross-links involve residues Lys-29 and Lys-34. At Ser-40 the chain carries Phosphoserine. Residue Lys-45 forms a Glycyl lysine isopeptide (Lys-Gly) (interchain with G-Cter in ubiquitin) linkage. At Thr-49 the chain carries Phosphothreonine. Basic and acidic residues predominate over residues 53–82; sequence EQVKKEEQNIADGVEQKKTEAANKVEETKK. Residues Lys-57 and Lys-82 each participate in a glycyl lysine isopeptide (Lys-Gly) (interchain with G-Cter in ubiquitin) cross-link.

Interacts with MID2. Phosphorylation of Ser-25 is induced 2-fold in response to mating pheromone.

The protein resides in the cell membrane. Acts antagonistically to MID2 in signaling cell wall stress to the PKC1-MPK1 cell integrity pathway. The sequence is that of Protein ZEO1 (ZEO1) from Saccharomyces cerevisiae (strain ATCC 204508 / S288c) (Baker's yeast).